A 484-amino-acid chain; its full sequence is Pheophytinase, chloroplastic (484 aa).

A chloroplast-targeting transit peptide spans 1-47 (MEIISLNVVPQCSVVTWSSKLATKRLVPNRSSLLFSGVKKSRLVIRS).

It belongs to the AB hydrolase superfamily. Interacts with HCAR, RCCR, PAO and the LHCII complex. Part of a SGR1-CCE-LHCII complex, which acts in chlorophyll breakdown.

The protein resides in the plastid. It localises to the chloroplast thylakoid membrane. Its subcellular location is the chloroplast stroma. Functionally, alpha/beta hydrolase dephytylating specifically the Mg-free chlorophyll pigment (pheophytin), yielding pheophorbide. No activity on chlorophyll. Belongs to the chlorophyll catabolic enzymes (CCEs). In Arabidopsis thaliana (Mouse-ear cress), this protein is Pheophytinase, chloroplastic (PPH).